Reading from the N-terminus, the 286-residue chain is Puff II/9-1 protein (286 aa).

The first 19 residues, 1-19 (MKQFIVLTVVLLAIQELQG), serve as a signal peptide directing secretion. The segment at 61–235 (ITAIKKDNDF…ENALNTLRCE (175 aa)) is helical. The N-linked (GlcNAc...) asparagine glycan is linked to N156.

This is Puff II/9-1 protein (II/9-1) from Bradysia coprophila (Dark-winged fungus gnat).